Here is a 286-residue protein sequence, read N- to C-terminus: ATP synthase gamma chain (286 aa).

Belongs to the ATPase gamma chain family. F-type ATPases have 2 components, CF(1) - the catalytic core - and CF(0) - the membrane proton channel. CF(1) has five subunits: alpha(3), beta(3), gamma(1), delta(1), epsilon(1). CF(0) has three main subunits: a, b and c.

The protein resides in the cell inner membrane. In terms of biological role, produces ATP from ADP in the presence of a proton gradient across the membrane. The gamma chain is believed to be important in regulating ATPase activity and the flow of protons through the CF(0) complex. The protein is ATP synthase gamma chain of Shewanella sediminis (strain HAW-EB3).